Here is a 230-residue protein sequence, read N- to C-terminus: Uracil-DNA glycosylase (230 aa).

Aspartate 70 acts as the Proton acceptor in catalysis.

The protein belongs to the uracil-DNA glycosylase (UDG) superfamily. UNG family.

It is found in the cytoplasm. It catalyses the reaction Hydrolyzes single-stranded DNA or mismatched double-stranded DNA and polynucleotides, releasing free uracil.. Excises uracil residues from the DNA which can arise as a result of misincorporation of dUMP residues by DNA polymerase or due to deamination of cytosine. This chain is Uracil-DNA glycosylase, found in Pseudomonas syringae pv. tomato (strain ATCC BAA-871 / DC3000).